Reading from the N-terminus, the 954-residue chain is MTTPTEFQFTDYQPYDFANRRHIGPSPAEMTDMLKVIGFNSLDGLIDATLPPTIRQKAPLVWGAPMTEREALDKLRETANKNKVLVSLIGQGYYGTITPPVIQRNILENPAWYTAYTPYQPEISQGRLEALLNYQTMVCDLTGLDVANASLLDEATAAAEGMAMAERVSKSKAKAFFVDADCHPQTIALIRTRAEPLGWSVIVGNPFTDLDPVDVFGAIFQYPGTHGHVHDFTGLIARLHQAGAISVVAADILALTLLKSPGEMGADIAVGSSQRFGVPVGYGGPHAAYMAVKDAIKRSMPGRLVGVSVDARGNRAYRLSLQTREQHIRREKATSNICTAQVLLAVMASMYAVFHGPDGIKAIAQQVHQKAVLMAKGLEKLGYKVEPESFFDTITVDVGHMQGLILRAAVAEGVNLRKVGETKIGMSLDERTRPATLEAVWRAFGGNFTIADFEPSYLLPKGLLRTTDYLAHPIFHMNRAESEMTRYIRRLSDRDLALDRSMIPLGSCTMKLNATAEMLPITWPEFSDIHPFVPADQALGYREMLDDLTEKLCAVTGYDAFSMQPNSGAQGEYAGLLTIRNYHIANGEGHRDVCLIPTSAHGTNPASAQMVGMKVVVVKVRENGDIDLDDFRTKAEEHAASLSCCMITYPSTHGVFEETVKEICELVHKHGGQVYLDGANMNAMVGLSRPGDIGSDVSHLNLHKTFCIPHGGGGPGMGPIGVKAHLAPHLPGHPETDGRPGAVSAAAFGSASILPISWSYCLMMGGEGLTQATKVAILNANYIAARLKGAYDVLYKSKTGRVAHECIIDTRPLVDSSGVTVDDVAKRLIDCGFHAPTMSWPVSGTLMIEPTESETKAELDRFCEAMLAIREEARAIEDGRMDKINNPLKNAPHTVEDLVGEWDRPYSREQACFPPGAFRVDKYWSPVNRVDNVYGDRNLICTCPPVESYAEAAE.

An N6-(pyridoxal phosphate)lysine modification is found at lysine 704.

It belongs to the GcvP family. The glycine cleavage system is composed of four proteins: P, T, L and H. Pyridoxal 5'-phosphate is required as a cofactor.

The catalysed reaction is N(6)-[(R)-lipoyl]-L-lysyl-[glycine-cleavage complex H protein] + glycine + H(+) = N(6)-[(R)-S(8)-aminomethyldihydrolipoyl]-L-lysyl-[glycine-cleavage complex H protein] + CO2. Its function is as follows. The glycine cleavage system catalyzes the degradation of glycine. The P protein binds the alpha-amino group of glycine through its pyridoxal phosphate cofactor; CO(2) is released and the remaining methylamine moiety is then transferred to the lipoamide cofactor of the H protein. This is Glycine dehydrogenase (decarboxylating) from Rhizobium etli (strain CIAT 652).